The following is an 800-amino-acid chain: DNA topoisomerase 4 subunit A (800 aa).

One can recognise a Topo IIA-type catalytic domain in the interval 31–495 (LPDVRDGLKP…EIEEIKIDKE (465 aa)). The active-site O-(5'-phospho-DNA)-tyrosine intermediate is tyrosine 119.

It belongs to the type II topoisomerase GyrA/ParC subunit family. ParC type 2 subfamily. In terms of assembly, heterotetramer composed of ParC and ParE.

Its subcellular location is the cell membrane. It carries out the reaction ATP-dependent breakage, passage and rejoining of double-stranded DNA.. Its function is as follows. Topoisomerase IV is essential for chromosome segregation. It relaxes supercoiled DNA. Performs the decatenation events required during the replication of a circular DNA molecule. The polypeptide is DNA topoisomerase 4 subunit A (Staphylococcus aureus (strain MW2)).